Reading from the N-terminus, the 133-residue chain is Salmonella pathogenicity island 2 protein C (133 aa).

Interacts with the mammalian NIPSNAP3A and HOOK3 proteins in infected cells.

The protein resides in the secreted. It localises to the cytoplasm. Functionally, virulence protein that plays a central role in mammalian macrophage infection, by inhibiting phagosome-lysosome fusion and cellular trafficking, including trafficking of organelles that are devoid of Salmonella. May act by disrupting the function of the mammalian HOOK3 protein, a protein involved in the cellular traffic. Also required for actin ADP-ribosylase SpvB activity. The chain is Salmonella pathogenicity island 2 protein C (spiC) from Salmonella typhimurium (strain 14028s / SGSC 2262).